The chain runs to 442 residues: Cell division protein FtsA (442 aa).

Belongs to the FtsA/MreB family. As to quaternary structure, self-interacts. Interacts with FtsZ.

It is found in the cell inner membrane. Functionally, cell division protein that is involved in the assembly of the Z ring. May serve as a membrane anchor for the Z ring. The sequence is that of Cell division protein FtsA from Rhizobium meliloti (strain 1021) (Ensifer meliloti).